Reading from the N-terminus, the 78-residue chain is Large ribosomal subunit protein bL28 (78 aa).

The protein belongs to the bacterial ribosomal protein bL28 family.

In Azoarcus sp. (strain BH72), this protein is Large ribosomal subunit protein bL28.